The sequence spans 233 residues: Small ribosomal subunit protein uS3 (233 aa).

In terms of domain architecture, KH type-2 spans 39 to 107; the sequence is VREFLKAKLK…PVHVNIEEVR (69 aa). A disordered region spans residues 209-233; that stretch reads PGQVSAEPTQPEKKMRKGGRNAAAN.

Belongs to the universal ribosomal protein uS3 family. In terms of assembly, part of the 30S ribosomal subunit. Forms a tight complex with proteins S10 and S14.

In terms of biological role, binds the lower part of the 30S subunit head. Binds mRNA in the 70S ribosome, positioning it for translation. This Laribacter hongkongensis (strain HLHK9) protein is Small ribosomal subunit protein uS3.